We begin with the raw amino-acid sequence, 487 residues long: WD-40 repeat-containing protein MSI5 (487 aa).

Met1 bears the N-acetylmethionine mark. The span at 1 to 12 (MESEAAATVQAT) shows a compositional bias: low complexity. Residues 1–44 (MESEAAATVQATRPRRAPRTPVTAILTDKRRRKPKSNNESQLPF) form a disordered region. A Nuclear localization signal motif is present at residues 14–21 (PRRAPRTP). 6 WD repeats span residues 142–182 (IHPG…DRYA), 197–237 (GHQD…TMAG), 270–310 (GHKD…SPAM), 315–355 (AHDA…SNGV), 364–404 (GHRA…KKSE), and 419–466 (GHRD…YRPE). Residues 236–268 (AGSDSKSPGSSFKQTGEGSDKTGGPSVGPRGIY) form a disordered region. A compositionally biased stretch (polar residues) spans 237 to 252 (GSDSKSPGSSFKQTGE). The short motif at 288–303 (FCSVGDDSCLMLWDAR) is the DWD box element.

This sequence belongs to the WD repeat RBAP46/RBAP48/MSI1 family. As to quaternary structure, interacts with AHL16. Interacts with LHP1, PDP2, PDP3 and PDP6. Component of the PRC2 (polycomb repressive complex 2) complex which regulates histone methylation on histone H3K27.

The protein localises to the nucleus. Core histone-binding subunit that may target chromatin assembly factors, chromatin remodeling factors and histone deacetylases to their histone substrates in a manner that is regulated by nucleosomal DNA. Acts together with PDP1 and MSI4/FVE to regulate the function of the PRC2 complex on FLC. The protein is WD-40 repeat-containing protein MSI5 of Arabidopsis thaliana (Mouse-ear cress).